The chain runs to 314 residues: Homoserine kinase (314 aa).

95–105 (PHSRGLGSSAA) lines the ATP pocket.

It belongs to the GHMP kinase family. Homoserine kinase subfamily.

Its subcellular location is the cytoplasm. The enzyme catalyses L-homoserine + ATP = O-phospho-L-homoserine + ADP + H(+). The protein operates within amino-acid biosynthesis; L-threonine biosynthesis; L-threonine from L-aspartate: step 4/5. Its function is as follows. Catalyzes the ATP-dependent phosphorylation of L-homoserine to L-homoserine phosphate. In Mycobacterium sp. (strain KMS), this protein is Homoserine kinase.